Here is a 93-residue protein sequence, read N- to C-terminus: Class I hydrophobin SSP1 (93 aa).

The signal sequence occupies residues 1-26; sequence MKYITAISMLATAALTAATPLNGVEA. Cystine bridges form between cysteine 39/cysteine 71, cysteine 47/cysteine 65, cysteine 48/cysteine 56, and cysteine 72/cysteine 89.

Belongs to the fungal hydrophobin family. Self-assembles to form functional amyloid fibrils called rodlets. Self-assembly into fibrillar rodlets occurs spontaneously at hydrophobic:hydrophilic interfaces and the rodlets further associate laterally to form amphipathic monolayers.

It is found in the secreted. Its subcellular location is the cell wall. Functionally, aerial growth, conidiation, and dispersal of filamentous fungi in the environment rely upon a capability of their secreting small amphipathic proteins called hydrophobins (HPBs) with low sequence identity. Class I can self-assemble into an outermost layer of rodlet bundles on aerial cell surfaces, conferring cellular hydrophobicity that supports fungal growth, development and dispersal; whereas Class II form highly ordered films at water-air interfaces through intermolecular interactions but contribute nothing to the rodlet structure. SSP1 is a class I hydrophobin that acts as an effector in the ericoid mycorrhizal interaction with Vaccinium myrtillus. May enhance attachment of the fungus to the root surface and protect the fungal hypha from plant defense compounds. The chain is Class I hydrophobin SSP1 from Oidiodendron maius (strain Zn).